The following is a 422-amino-acid chain: Cyclin-A2 (422 aa).

The residue at position 1 (Met1) is an N-acetylmethionine. A disordered region spans residues 1–62; that stretch reads MPGTSRHSGR…APQQKLKTRR (62 aa). Ser5 carries the post-translational modification Phosphoserine.

This sequence belongs to the cyclin family. Cyclin AB subfamily. As to quaternary structure, interacts with the CDK1 and CDK2 protein kinases to form serine/threonine kinase holoenzyme complexes. Interacts with CDK1 (hyperphosphorylated form in G1 and underphosphorylated forms in S and G2). Interacts with CDK2; the interaction increases from G1 to G2. Interacts (associated with CDK2 but not with CDK1) with SCAPER; regulates the activity of CCNA2/CDK2 by transiently maintaining CCNA2 in the cytoplasm. Forms a ternary complex with CDK2 and CDKN1B; CDKN1B inhibits the kinase activity of CDK2 through conformational rearrangements. Interacts with INCA1. (Microbial infection) Interacts with mouse cytomegalovirus/MCMV kinase M97; this interaction sequesters CCNA2 to the cytoplasm. Polyubiquitinated via 'Lys-11'-linked ubiquitin by the anaphase-promoting complex (APC/C), leading to its degradation by the proteasome. Deubiquitinated and stabilized by USP37 enables entry into S phase. Ubiquitinated during the G1 phase by the SCF(FBXO31) complex, leading to its proteasomal degradation. In terms of tissue distribution, ubiquitous. In the testis, expressed in germ cells and in the ovary, in both germline and somatic cells.

It localises to the nucleus. The protein resides in the cytoplasm. Its function is as follows. Cyclin which controls both the G1/S and the G2/M transition phases of the cell cycle. Functions through the formation of specific serine/threonine kinase holoenzyme complexes with the cyclin-dependent protein kinases CDK1 and CDK2. The cyclin subunit confers the substrate specificity of these complexes and differentially interacts with and activates CDK1 and CDK2 throughout the cell cycle. The polypeptide is Cyclin-A2 (Mus musculus (Mouse)).